The following is a 132-amino-acid chain: Agouti-signaling protein (132 aa).

The first 22 residues, 1 to 22, serve as a signal peptide directing secretion; the sequence is MDVTRLVLATLLVFLCFFAAYS. An N-linked (GlcNAc...) asparagine glycan is attached at N39. Residues 60–93 are disordered; the sequence is KKISRKEAEKRRSSKKEASKQKVARPRTPLSVPC. Positions 64–79 are enriched in basic and acidic residues; it reads RKEAEKRRSSKKEASK. 5 disulfides stabilise this stretch: C93–C108, C100–C114, C107–C125, C111–C132, and C116–C123. In terms of domain architecture, Agouti spans 93–132; sequence CVSTRGSCKPPAPACCHPCASCQCRFFRSACSCRVLNVNC.

The protein localises to the secreted. Functionally, involved in the regulation of melanogenesis. The binding of ASP to MC1R precludes alpha-MSH initiated signaling and thus blocks production of cAMP, leading to a down-regulation of eumelanogenesis (brown/black pigment) and thus increasing synthesis of pheomelanin (yellow/red pigment). In Cebuella pygmaea (Pygmy marmoset), this protein is Agouti-signaling protein (ASIP).